Reading from the N-terminus, the 226-residue chain is 7-cyano-7-deazaguanine synthase (226 aa).

Residue 10–20 (LSGGLDSATAA) coordinates ATP. Zn(2+) is bound by residues cysteine 191, cysteine 199, cysteine 202, and cysteine 205.

The protein belongs to the QueC family. Zn(2+) serves as cofactor.

The catalysed reaction is 7-carboxy-7-deazaguanine + NH4(+) + ATP = 7-cyano-7-deazaguanine + ADP + phosphate + H2O + H(+). It functions in the pathway purine metabolism; 7-cyano-7-deazaguanine biosynthesis. Its function is as follows. Catalyzes the ATP-dependent conversion of 7-carboxy-7-deazaguanine (CDG) to 7-cyano-7-deazaguanine (preQ(0)). The chain is 7-cyano-7-deazaguanine synthase from Synechococcus sp. (strain CC9902).